The sequence spans 426 residues: Tyrosine--tRNA ligase (426 aa).

Tyrosine 36 is a binding site for L-tyrosine. Residues 41 to 50 (PTAPSLHVGH) carry the 'HIGH' region motif. L-tyrosine-binding residues include tyrosine 174 and glutamine 178. Positions 234 to 238 (KLGKS) match the 'KMSKS' region motif. Residue lysine 237 coordinates ATP. The S4 RNA-binding domain occupies 359 to 416 (DGIVDLLVASGLSPSRGAARRTIDEGGVLVNNIRIQSEEWTPRTSDFLHGRWLVLRRG).

Belongs to the class-I aminoacyl-tRNA synthetase family. TyrS type 1 subfamily. As to quaternary structure, homodimer.

The protein resides in the cytoplasm. It carries out the reaction tRNA(Tyr) + L-tyrosine + ATP = L-tyrosyl-tRNA(Tyr) + AMP + diphosphate + H(+). Catalyzes the attachment of tyrosine to tRNA(Tyr) in a two-step reaction: tyrosine is first activated by ATP to form Tyr-AMP and then transferred to the acceptor end of tRNA(Tyr). In Mycobacterium leprae (strain TN), this protein is Tyrosine--tRNA ligase.